Consider the following 225-residue polypeptide: Endonuclease V (225 aa).

Mg(2+) contacts are provided by D43 and D110.

The protein belongs to the endonuclease V family. The cofactor is Mg(2+).

It is found in the cytoplasm. The enzyme catalyses Endonucleolytic cleavage at apurinic or apyrimidinic sites to products with a 5'-phosphate.. DNA repair enzyme involved in the repair of deaminated bases. Selectively cleaves double-stranded DNA at the second phosphodiester bond 3' to a deoxyinosine leaving behind the intact lesion on the nicked DNA. The polypeptide is Endonuclease V (Thermotoga neapolitana (strain ATCC 49049 / DSM 4359 / NBRC 107923 / NS-E)).